The following is a 300-amino-acid chain: Sulfate adenylyltransferase subunit 2 (300 aa).

Residues 281-300 (RAIDRDEAGSMEKKKREGYF) form a disordered region.

This sequence belongs to the PAPS reductase family. CysD subfamily. As to quaternary structure, heterodimer composed of CysD, the smaller subunit, and CysN.

The catalysed reaction is sulfate + ATP + H(+) = adenosine 5'-phosphosulfate + diphosphate. The protein operates within sulfur metabolism; hydrogen sulfide biosynthesis; sulfite from sulfate: step 1/3. In terms of biological role, with CysN forms the ATP sulfurylase (ATPS) that catalyzes the adenylation of sulfate producing adenosine 5'-phosphosulfate (APS) and diphosphate, the first enzymatic step in sulfur assimilation pathway. APS synthesis involves the formation of a high-energy phosphoric-sulfuric acid anhydride bond driven by GTP hydrolysis by CysN coupled to ATP hydrolysis by CysD. The chain is Sulfate adenylyltransferase subunit 2 from Brucella canis (strain ATCC 23365 / NCTC 10854 / RM-666).